The primary structure comprises 411 residues: Imidazolonepropionase (411 aa).

Fe(3+) is bound by residues H75 and H77. Positions 75 and 77 each coordinate Zn(2+). R84, Y147, and H180 together coordinate 4-imidazolone-5-propanoate. Position 147 (Y147) interacts with N-formimidoyl-L-glutamate. Residue H245 coordinates Fe(3+). H245 contacts Zn(2+). Residue Q248 coordinates 4-imidazolone-5-propanoate. D320 provides a ligand contact to Fe(3+). Position 320 (D320) interacts with Zn(2+). N-formimidoyl-L-glutamate contacts are provided by N322 and G324. T325 contacts 4-imidazolone-5-propanoate.

Belongs to the metallo-dependent hydrolases superfamily. HutI family. Requires Zn(2+) as cofactor. Fe(3+) is required as a cofactor.

The protein localises to the cytoplasm. It carries out the reaction 4-imidazolone-5-propanoate + H2O = N-formimidoyl-L-glutamate. Its pathway is amino-acid degradation; L-histidine degradation into L-glutamate; N-formimidoyl-L-glutamate from L-histidine: step 3/3. Its function is as follows. Catalyzes the hydrolytic cleavage of the carbon-nitrogen bond in imidazolone-5-propanoate to yield N-formimidoyl-L-glutamate. It is the third step in the universal histidine degradation pathway. This is Imidazolonepropionase from Aeromonas hydrophila subsp. hydrophila (strain ATCC 7966 / DSM 30187 / BCRC 13018 / CCUG 14551 / JCM 1027 / KCTC 2358 / NCIMB 9240 / NCTC 8049).